A 393-amino-acid polypeptide reads, in one-letter code: DNA primase large subunit PriL (393 aa).

Cys230, Cys339, Cys350, and Cys356 together coordinate [4Fe-4S] cluster.

This sequence belongs to the eukaryotic-type primase large subunit family. In terms of assembly, heterodimer of a small subunit (PriS) and a large subunit (PriL). It depends on [4Fe-4S] cluster as a cofactor.

Its function is as follows. Regulatory subunit of DNA primase, an RNA polymerase that catalyzes the synthesis of short RNA molecules used as primers for DNA polymerase during DNA replication. Stabilizes and modulates the activity of the small subunit, increasing the rate of DNA synthesis, and conferring RNA synthesis capability. The DNA polymerase activity may enable DNA primase to also catalyze primer extension after primer synthesis. May also play a role in DNA repair. Displays gap-filling and strand-displacement activities. This chain is DNA primase large subunit PriL, found in Pyrococcus abyssi (strain GE5 / Orsay).